We begin with the raw amino-acid sequence, 185 residues long: uncharacterized protein (185 aa).

Residues 1–56 constitute a chloroplast transit peptide; sequence MSSFTIPSPSSFSLSNSYNQTSPHSFTLRNSRSNFEFHRLRLDVESRRRSTSLRSN. Positions 48-67 are disordered; that stretch reads RRSTSLRSNCSTKGTDSGEN. Positions 52-64 are enriched in polar residues; sequence SLRSNCSTKGTDS. Residues 105 to 138 adopt a coiled-coil conformation; the sequence is QAEQQKQVQEIQEEVLERAKKAKERAARETMEEQ.

It is found in the plastid. The protein resides in the chloroplast. It localises to the plastoglobule. This is an uncharacterized protein from Arabidopsis thaliana (Mouse-ear cress).